A 234-amino-acid polypeptide reads, in one-letter code: 2-C-methyl-D-erythritol 4-phosphate cytidylyltransferase (234 aa).

This sequence belongs to the IspD/TarI cytidylyltransferase family. IspD subfamily.

It carries out the reaction 2-C-methyl-D-erythritol 4-phosphate + CTP + H(+) = 4-CDP-2-C-methyl-D-erythritol + diphosphate. It functions in the pathway isoprenoid biosynthesis; isopentenyl diphosphate biosynthesis via DXP pathway; isopentenyl diphosphate from 1-deoxy-D-xylulose 5-phosphate: step 2/6. Functionally, catalyzes the formation of 4-diphosphocytidyl-2-C-methyl-D-erythritol from CTP and 2-C-methyl-D-erythritol 4-phosphate (MEP). This chain is 2-C-methyl-D-erythritol 4-phosphate cytidylyltransferase, found in Pseudomonas aeruginosa (strain UCBPP-PA14).